We begin with the raw amino-acid sequence, 502 residues long: Polyadenylate-binding protein, cytoplasmic and nuclear (502 aa).

RRM domains follow at residues 14 to 90 (LTIY…KKDE), 96 to 176 (GNIF…LYNP), 191 to 275 (TNCF…KGQR), and 299 to 376 (KNLY…YFKN).

This sequence belongs to the polyadenylate-binding protein type-1 family.

It localises to the cytoplasm. The protein localises to the nucleus. Its function is as follows. Binds the poly(A) tail of mRNA. Appears to be an important mediator of the multiple roles of the poly(A) tail in mRNA biogenesis, stability and translation. The polypeptide is Polyadenylate-binding protein, cytoplasmic and nuclear (PAB1) (Encephalitozoon cuniculi (strain GB-M1) (Microsporidian parasite)).